The primary structure comprises 684 residues: Glycine--tRNA ligase beta subunit (684 aa).

The protein belongs to the class-II aminoacyl-tRNA synthetase family. In terms of assembly, tetramer of two alpha and two beta subunits.

The protein localises to the cytoplasm. It catalyses the reaction tRNA(Gly) + glycine + ATP = glycyl-tRNA(Gly) + AMP + diphosphate. The sequence is that of Glycine--tRNA ligase beta subunit from Pseudomonas savastanoi pv. phaseolicola (strain 1448A / Race 6) (Pseudomonas syringae pv. phaseolicola (strain 1448A / Race 6)).